The primary structure comprises 520 residues: Cyclic AMP-responsive element-binding protein 3-like protein 2 (520 aa).

The Cytoplasmic segment spans residues 1 to 378 (MEVLESGEQG…CKLAGTQTGT (378 aa)). Residue S93 is modified to Phosphoserine. A Glycyl lysine isopeptide (Lys-Gly) (interchain with G-Cter in SUMO2) cross-link involves residue K178. S191 carries the phosphoserine modification. A disordered region spans residues 195–264 (APVDHLHLPP…PHKLQGSGPL (70 aa)). 2 stretches are compositionally biased toward low complexity: residues 208–220 (SSHGSDSEGSLSP) and 234–255 (SPSRAAPRAPSALSSSPLLTAP). Residues 294–357 (ALKKIRRKIK…RTLLQQLQKL (64 aa)) form the bZIP domain. Positions 296–325 (KKIRRKIKNKISAQESRRKKKEYMDSLEKK) are basic motif. Residues 336–357 (LRKKVEVLENTNRTLLQQLQKL) form a leucine-zipper region. Residues 379 to 399 (CLMVVVLCFAVAFGSFFQGYG) traverse the membrane as a helical; Signal-anchor for type II membrane protein segment. The Lumenal portion of the chain corresponds to 400-520 (PYPSATKMAL…ELDRRVNTTF (121 aa)). The short motif at 427–430 (RNLL) is the S1P recognition element. N-linked (GlcNAc...) asparagine glycans are attached at residues N480, N504, and N517.

The protein belongs to the bZIP family. ATF subfamily. In terms of assembly, binds DNA as a dimer. In terms of processing, upon ER stress, translocated to the Golgi apparatus, where it is processed by regulated intramembrane proteolysis (RIP) to release the cytosol-facing N-terminal transcription factor domain. The cleavage is performed sequentially by site-1 and site-2 proteases (S1P/MBTPS1 and S2P/MBTPS2). Post-translationally, N-glycosylated. Ubiquitinated by HRD1/SYVN1; undergoes 'Lys-48'-linked ubiquitination, followed by rapid proteasomal degradation under normal conditions. Upon ER stress, SYVN1 E3 ubiquitin-protein ligase dissociates from its substrate, ubiquitination does not occur and CREB3L2 is stabilized.

It is found in the endoplasmic reticulum membrane. Its subcellular location is the nucleus. Transcription factor involved in unfolded protein response (UPR). In the absence of endoplasmic reticulum (ER) stress, inserted into ER membranes, with N-terminal DNA-binding and transcription activation domains oriented toward the cytosolic face of the membrane. In response to ER stress, transported to the Golgi, where it is cleaved in a site-specific manner by resident proteases S1P/MBTPS1 and S2P/MBTPS2. The released N-terminal cytosolic domain is translocated to the nucleus to effect transcription of specific target genes. Plays a critical role in chondrogenesis by activating the transcription of SEC23A, which promotes the transport and secretion of cartilage matrix proteins, and possibly that of ER biogenesis-related genes. In a neuroblastoma cell line, protects cells from ER stress-induced death. In vitro activates transcription of target genes via direct binding to the CRE site. In Pongo abelii (Sumatran orangutan), this protein is Cyclic AMP-responsive element-binding protein 3-like protein 2 (CREB3L2).